We begin with the raw amino-acid sequence, 158 residues long: Methylglyoxal synthase (158 aa).

Residues 1 to 158 enclose the MGS-like domain; sequence MRRKLRIALV…AFEESLKVKE (158 aa). Residues histidine 12, lysine 16, 38 to 41, and 63 to 64 each bind substrate; these read TGTT and SG. Residue aspartate 69 is the Proton donor/acceptor of the active site. A substrate-binding site is contributed by histidine 96.

It belongs to the methylglyoxal synthase family.

The enzyme catalyses dihydroxyacetone phosphate = methylglyoxal + phosphate. Functionally, catalyzes the formation of methylglyoxal from dihydroxyacetone phosphate. The sequence is that of Methylglyoxal synthase from Treponema socranskii.